The following is a 336-amino-acid chain: D-alanine--D-alanine ligase (336 aa).

In terms of domain architecture, ATP-grasp spans 124-330 (KMWFSALGIP…FTEYLSLVIK (207 aa)). Position 154–209 (154–209 (ALENWGSIFVKAASQGSSVGCYKVDDSSKVAGVLKDAFGYAPYVIVEKTIKARELE)) interacts with ATP. Asp-284, Glu-297, and Asn-299 together coordinate Mg(2+).

The protein belongs to the D-alanine--D-alanine ligase family. It depends on Mg(2+) as a cofactor. Mn(2+) serves as cofactor.

Its subcellular location is the cytoplasm. The catalysed reaction is 2 D-alanine + ATP = D-alanyl-D-alanine + ADP + phosphate + H(+). Its pathway is cell wall biogenesis; peptidoglycan biosynthesis. In terms of biological role, cell wall formation. In Shewanella sp. (strain MR-7), this protein is D-alanine--D-alanine ligase.